The following is a 133-amino-acid chain: Small ribosomal subunit protein uS8 (133 aa).

It belongs to the universal ribosomal protein uS8 family. Part of the 30S ribosomal subunit. Contacts proteins S5 and S12.

One of the primary rRNA binding proteins, it binds directly to 16S rRNA central domain where it helps coordinate assembly of the platform of the 30S subunit. The chain is Small ribosomal subunit protein uS8 from Deinococcus radiodurans (strain ATCC 13939 / DSM 20539 / JCM 16871 / CCUG 27074 / LMG 4051 / NBRC 15346 / NCIMB 9279 / VKM B-1422 / R1).